Consider the following 496-residue polypeptide: Glycogen synthase (496 aa).

Lys24 is an ADP-alpha-D-glucose binding site.

This sequence belongs to the glycosyltransferase 1 family. Bacterial/plant glycogen synthase subfamily.

It carries out the reaction [(1-&gt;4)-alpha-D-glucosyl](n) + ADP-alpha-D-glucose = [(1-&gt;4)-alpha-D-glucosyl](n+1) + ADP + H(+). Its pathway is glycan biosynthesis; glycogen biosynthesis. Its function is as follows. Synthesizes alpha-1,4-glucan chains using ADP-glucose. The sequence is that of Glycogen synthase from Nitrosospira multiformis (strain ATCC 25196 / NCIMB 11849 / C 71).